The sequence spans 120 residues: UPF0102 protein FRAAL5785 (120 aa).

The protein belongs to the UPF0102 family.

This Frankia alni (strain DSM 45986 / CECT 9034 / ACN14a) protein is UPF0102 protein FRAAL5785.